The primary structure comprises 65 residues: uncharacterized protein (65 aa).

Residues Ile37–Ile57 form a helical membrane-spanning segment.

The protein localises to the cell membrane. This is an uncharacterized protein from Bacillus subtilis (strain 168).